The sequence spans 969 residues: Endogenous retrovirus group K member 11 Pol protein (969 aa).

Residues 57-245 form the Reverse transcriptase domain; the sequence is LEKGHIEPSF…TPFHYLGMQI (189 aa). An LPQG motif is present at residues 161-164; it reads LPQG. The RNase H type-1 domain occupies 460–590; the sequence is LENALTVFTD…ADLLVSSALI (131 aa). Asp-469, Glu-497, Asp-517, and Asp-582 together coordinate Mg(2+). The Integrase-type zinc-finger motif lies at 587-628; the sequence is SALIKAQELHALTHVNAAGLKNKFDVTWKQAKDIVQHCTQCQ. Zn(2+)-binding residues include His-596, His-600, Cys-624, and Cys-627. An Integrase catalytic domain is found at 642–803; that stretch reads RGLCPNALWQ…TSAEQHLTGK (162 aa). A DNA-binding region (integrase-type) is located at residues 811–859; it reads KLIWWKDNKNKTWEIGKVITWGRGFACVSPGENQLPVWIPTRHLKFYNE.

Belongs to the beta type-B retroviral polymerase family. HERV class-II K(HML-2) pol subfamily.

The catalysed reaction is DNA(n) + a 2'-deoxyribonucleoside 5'-triphosphate = DNA(n+1) + diphosphate. It catalyses the reaction Endonucleolytic cleavage to 5'-phosphomonoester.. Functionally, early post-infection, the reverse transcriptase converts the viral RNA genome into double-stranded viral DNA. The RNase H domain of the reverse transcriptase performs two functions. It degrades the RNA template and specifically removes the RNA primer from the RNA/DNA hybrid. Following nuclear import, the integrase catalyzes the insertion of the linear, double-stranded viral DNA into the host cell chromosome. Endogenous Pol proteins may have kept, lost or modified their original function during evolution. The protein is Endogenous retrovirus group K member 11 Pol protein (ERVK-11) of Homo sapiens (Human).